The following is a 100-amino-acid chain: UPF0251 protein swp_0615 (100 aa).

Belongs to the UPF0251 family.

The sequence is that of UPF0251 protein swp_0615 from Shewanella piezotolerans (strain WP3 / JCM 13877).